Consider the following 213-residue polypeptide: Large ribosomal subunit protein uL1 (213 aa).

The protein belongs to the universal ribosomal protein uL1 family. In terms of assembly, part of the 50S ribosomal subunit.

Binds directly to 23S rRNA. Probably involved in E site tRNA release. Functionally, protein L1 is also a translational repressor protein, it controls the translation of its operon by binding to its mRNA. This is Large ribosomal subunit protein uL1 from Methanococcus maripaludis (strain C6 / ATCC BAA-1332).